A 151-amino-acid polypeptide reads, in one-letter code: Neuroglobin (151 aa).

The region spanning 1–149 (MERPEPELIR…VVQAMSRGWD (149 aa)) is the Globin domain. Heme b is bound by residues H64 and H96.

Belongs to the globin family. Monomer. Homodimer and homotetramer; disulfide-linked. Mainly monomeric but also detected as part of homodimers and homotetramers. Interacts with 14-3-3 proteins; regulates the phosphorylation of NGB. Could interact (ferrous form) with G-alpha(i) proteins (GTP-bound form). Phosphorylated during hypoxia by ERK1/ERK2. Phosphorylation regulates the heme pocket hexacoordination preventing the association of His-64 with the heme metal center. Thereby, promotes the access of dioxygen and nitrite to the heme and stimulates the nitrite reductase activity. Phosphorylation during hypoxia is stabilized by 14-3-3 proteins.

Its subcellular location is the cytoplasm. It is found in the cytosol. The protein localises to the mitochondrion matrix. It carries out the reaction Fe(III)-heme b-[protein] + nitric oxide + H2O = Fe(II)-heme b-[protein] + nitrite + 2 H(+). Functionally, monomeric globin with a bis-histidyl six-coordinate heme-iron atom through which it can bind dioxygen, carbon monoxide and nitric oxide. Could help transport oxygen and increase its availability to the metabolically active neuronal tissues, though its low quantity in tissues as well as its high affinity for dioxygen, which may limit its oxygen-releasing ability, argue against it. The ferrous/deoxygenated form exhibits a nitrite reductase activity and it could produce nitric oxide which in turn inhibits cellular respiration in response to hypoxia. In its ferrous/deoxygenated state, it may also exhibit GDI (Guanine nucleotide Dissociation Inhibitor) activity toward heterotrimeric G-alpha proteins, thereby regulating signal transduction to facilitate neuroprotective responses in the wake of hypoxia and associated oxidative stress. The polypeptide is Neuroglobin (Macaca mulatta (Rhesus macaque)).